The following is a 324-amino-acid chain: Beta-ketoacyl-[acyl-carrier-protein] synthase III (324 aa).

Residues Cys-114 and His-251 contribute to the active site. The segment at 252–256 is ACP-binding; that stretch reads QANLR. Asn-281 is an active-site residue.

This sequence belongs to the thiolase-like superfamily. FabH family. In terms of assembly, homodimer.

The protein resides in the cytoplasm. The enzyme catalyses malonyl-[ACP] + acetyl-CoA + H(+) = 3-oxobutanoyl-[ACP] + CO2 + CoA. Its pathway is lipid metabolism; fatty acid biosynthesis. Catalyzes the condensation reaction of fatty acid synthesis by the addition to an acyl acceptor of two carbons from malonyl-ACP. Catalyzes the first condensation reaction which initiates fatty acid synthesis and may therefore play a role in governing the total rate of fatty acid production. Possesses both acetoacetyl-ACP synthase and acetyl transacylase activities. Its substrate specificity determines the biosynthesis of branched-chain and/or straight-chain of fatty acids. The protein is Beta-ketoacyl-[acyl-carrier-protein] synthase III of Dinoroseobacter shibae (strain DSM 16493 / NCIMB 14021 / DFL 12).